A 273-amino-acid chain; its full sequence is Large ribosomal subunit protein uL2cz/uL2cy (273 aa).

Disordered regions lie at residues 1-25 (MAIH…VKSN) and 224-273 (NPVD…RRRK).

It belongs to the universal ribosomal protein uL2 family. As to quaternary structure, part of the 50S ribosomal subunit.

It localises to the plastid. It is found in the chloroplast. The polypeptide is Large ribosomal subunit protein uL2cz/uL2cy (rpl2-A) (Phalaenopsis aphrodite subsp. formosana (Moth orchid)).